The following is a 52-amino-acid chain: Rubredoxin-2 (52 aa).

The Rubredoxin-like domain maps to 1–52 (MEQWKCNICGYIYNPETGDPEGDIPAGTSFESLPDSWMCPVCGAGKEEFTKI). Fe cation is bound by residues Cys-6, Cys-9, Cys-39, and Cys-42.

The protein belongs to the rubredoxin family. As to quaternary structure, monomer. Fe(3+) is required as a cofactor.

In terms of biological role, serves as an electron acceptor for pyruvate ferredoxin oxidoreductase (PFOR). This Chlorobaculum tepidum (strain ATCC 49652 / DSM 12025 / NBRC 103806 / TLS) (Chlorobium tepidum) protein is Rubredoxin-2 (rub2).